A 442-amino-acid chain; its full sequence is tRNA modification GTPase MnmE (442 aa).

Positions 22, 79, and 119 each coordinate (6S)-5-formyl-5,6,7,8-tetrahydrofolate. The TrmE-type G domain maps to 216–366 (GIKTCLVGAP…LLEKIKSIFA (151 aa)). Asparagine 226 serves as a coordination point for K(+). Residues 226–231 (NSGKSS), 245–251 (SEIPGTT), and 270–273 (DTAG) contribute to the GTP site. Mg(2+) is bound at residue serine 230. Residues serine 245, isoleucine 247, and threonine 250 each coordinate K(+). Threonine 251 provides a ligand contact to Mg(2+). Lysine 442 contributes to the (6S)-5-formyl-5,6,7,8-tetrahydrofolate binding site.

Belongs to the TRAFAC class TrmE-Era-EngA-EngB-Septin-like GTPase superfamily. TrmE GTPase family. Homodimer. Heterotetramer of two MnmE and two MnmG subunits. It depends on K(+) as a cofactor.

Its subcellular location is the cytoplasm. In terms of biological role, exhibits a very high intrinsic GTPase hydrolysis rate. Involved in the addition of a carboxymethylaminomethyl (cmnm) group at the wobble position (U34) of certain tRNAs, forming tRNA-cmnm(5)s(2)U34. The polypeptide is tRNA modification GTPase MnmE (Mesomycoplasma hyopneumoniae (strain 232) (Mycoplasma hyopneumoniae)).